The following is a 372-amino-acid chain: Queuine tRNA-ribosyltransferase (372 aa).

Catalysis depends on D92, which acts as the Proton acceptor. Residues 92–96, D146, Q188, and G215 each bind substrate; that span reads DSGGY. The tract at residues 246-252 is RNA binding; that stretch reads GIGSLRE. The active-site Nucleophile is the D265. An RNA binding; important for wobble base 34 recognition region spans residues 270–274; sequence TRLGR. Zn(2+)-binding residues include C303, C305, C308, and H334.

This sequence belongs to the queuine tRNA-ribosyltransferase family. In terms of assembly, homodimer. Within each dimer, one monomer is responsible for RNA recognition and catalysis, while the other monomer binds to the replacement base PreQ1. It depends on Zn(2+) as a cofactor.

It carries out the reaction 7-aminomethyl-7-carbaguanine + guanosine(34) in tRNA = 7-aminomethyl-7-carbaguanosine(34) in tRNA + guanine. Its pathway is tRNA modification; tRNA-queuosine biosynthesis. Functionally, catalyzes the base-exchange of a guanine (G) residue with the queuine precursor 7-aminomethyl-7-deazaguanine (PreQ1) at position 34 (anticodon wobble position) in tRNAs with GU(N) anticodons (tRNA-Asp, -Asn, -His and -Tyr). Catalysis occurs through a double-displacement mechanism. The nucleophile active site attacks the C1' of nucleotide 34 to detach the guanine base from the RNA, forming a covalent enzyme-RNA intermediate. The proton acceptor active site deprotonates the incoming PreQ1, allowing a nucleophilic attack on the C1' of the ribose to form the product. After dissociation, two additional enzymatic reactions on the tRNA convert PreQ1 to queuine (Q), resulting in the hypermodified nucleoside queuosine (7-(((4,5-cis-dihydroxy-2-cyclopenten-1-yl)amino)methyl)-7-deazaguanosine). The protein is Queuine tRNA-ribosyltransferase of Prochlorococcus marinus (strain MIT 9215).